Here is a 908-residue protein sequence, read N- to C-terminus: DNA (cytosine-5)-methyltransferase 3A (908 aa).

Over residues 1–13 (MPSSGPGDTSSSS) the composition is skewed to low complexity. Disordered regions lie at residues 1–183 (MPSS…PMPR) and 226–281 (NQAS…PEYE). Positions 14-37 (LEREDDRKEGEEQEENRGKEERQE) are enriched in basic and acidic residues. The segment covering 44–54 (KVGRPGRKRKH) has biased composition (basic residues). Residues 69 to 80 (TTKSQPMAQDSG) show a composition bias toward polar residues. The residue at position 102 (Ser102) is a Phosphoserine. Residues 110–124 (GAPAEGEGTETPPEA) are compositionally biased toward low complexity. Phosphothreonine is present on Thr120. Residue Lys158 forms a Glycyl lysine isopeptide (Lys-Gly) (interchain with G-Cter in SUMO2) linkage. Residue Arg167 is modified to Omega-N-methylarginine. The segment at 195–399 (SKRKRDEWLA…DSGKAVEVQN (205 aa)) is interaction with DNMT1 and DNMT3B. Residues Ser239 and Ser251 each carry the phosphoserine modification. Positions 242–256 (AVQQPTDPASPTVAT) are enriched in polar residues. Thr257 carries the post-translational modification Phosphothreonine. Positions 265–275 (AGDKNATKAAD) are enriched in basic and acidic residues. Positions 288 to 346 (IGELVWGKLRGFSWWPGRIVSWWMTGRSRAAEGTRWVMWFGDGKFSVVCVEKLMPLSSF) constitute a PWWP domain. Ser386 and Ser389 each carry phosphoserine. The disordered stretch occupies residues 443 to 462 (AYAPPPPAKKPRKSTTEKPK). The region spanning 478 to 610 (EVRQKCRNIE…LQMFFANNHD (133 aa)) is the ADD domain. The GATA-type; atypical zinc-finger motif lies at 489-519 (ICISCGSLNVTLEHPLFIGGMCQNCKNCFLE). The segment at 490-582 (CISCGSLNVT…KEDPWNCYMC (93 aa)) is interaction with the PRC2/EED-EZH2 complex. The PHD-type; atypical zinc finger occupies 530-586 (QSYCTICCGGREVLMCGNNNCCRCFCVECVDLLVGPGAAQAAIKEDPWNCYMCGHKG). The SAM-dependent MTase C5-type domain maps to 630–908 (IRVLSLFDGI…APLKEYFACV (279 aa)). Residues 637 to 641 (DGIAT), Glu660, and 682 to 684 (DVR) each bind S-adenosyl-L-methionine. The active site involves Cys706. Cys706 bears the S-methylcysteine; by autocatalysis mark. An S-adenosyl-L-methionine-binding site is contributed by 887-889 (RSW).

This sequence belongs to the class I-like SAM-binding methyltransferase superfamily. C5-methyltransferase family. In terms of assembly, heterotetramer composed of 1 DNMT3A homodimer and 2 DNMT3L subunits (DNMT3L-DNMT3A-DNMT3A-DNMT3L). Interacts with DNMT1 and DNMT3B. Interacts with MPHOSPH8. Interacts with histone H3 that is not methylated at 'Lys-4' (H3K4). Binds the ZBTB18 transcriptional repressor. Interacts with SETDB1. Associates with HDAC1 through its ADD domain. Interacts with UHRF1. Interacts with the PRC2/EED-EZH2 complex. Interacts with UBC9, PIAS1 and PIAS2. Interacts with SPOCD1. Interacts with ZNF263; recruited to the SIX3 promoter along with other proteins involved in chromatin modification and transcriptional corepression where it contributes to transcriptional repression. Post-translationally, auto-methylated at Cys-706: auto-methylation takes place in absence of DNA substrate and inactivates the DNA methyltransferase activity. Inactivation by auto-methylation may be used to inactivate unused DNA methyltransferases in the cell. In terms of processing, sumoylated; sumoylation disrupts the ability to interact with histone deacetylases (HDAC1 and HDAC2) and repress transcription. As to expression, isoform 1 is expressed ubiquitously at low levels. Expression of isoform 2 is restricted to tissues containing cells which are undergoing active de novo methylation, including spleen, testis and thymus.

It is found in the nucleus. Its subcellular location is the chromosome. The protein localises to the cytoplasm. The enzyme catalyses a 2'-deoxycytidine in DNA + S-adenosyl-L-methionine = a 5-methyl-2'-deoxycytidine in DNA + S-adenosyl-L-homocysteine + H(+). The catalysed reaction is L-cysteinyl-[protein] + S-adenosyl-L-methionine = S-methyl-L-cysteinyl-[protein] + S-adenosyl-L-homocysteine + H(+). Activated by binding to the regulatory factor DNMT3L. Auto-methylation at Cys-706 in absence of DNA inactivates the DNA methyltransferase activity. Its function is as follows. Required for genome-wide de novo methylation and is essential for the establishment of DNA methylation patterns during development. DNA methylation is coordinated with methylation of histones. It modifies DNA in a non-processive manner and also methylates non-CpG sites. May preferentially methylate DNA linker between 2 nucleosomal cores and is inhibited by histone H1. Plays a role in paternal and maternal imprinting. Required for methylation of most imprinted loci in germ cells. Acts as a transcriptional corepressor for ZBTB18. Recruited to trimethylated 'Lys-36' of histone H3 (H3K36me3) sites. Can actively repress transcription through the recruitment of HDAC activity. Also has weak auto-methylation activity on Cys-706 in absence of DNA. This chain is DNA (cytosine-5)-methyltransferase 3A, found in Mus musculus (Mouse).